We begin with the raw amino-acid sequence, 435 residues long: Light-independent protochlorophyllide reductase subunit N (435 aa).

Cys-23, Cys-48, and Cys-108 together coordinate [4Fe-4S] cluster.

Belongs to the BchN/ChlN family. As to quaternary structure, protochlorophyllide reductase is composed of three subunits; ChlL, ChlN and ChlB. Forms a heterotetramer of two ChlB and two ChlN subunits. Requires [4Fe-4S] cluster as cofactor.

It localises to the plastid. The protein resides in the chloroplast. It carries out the reaction chlorophyllide a + oxidized 2[4Fe-4S]-[ferredoxin] + 2 ADP + 2 phosphate = protochlorophyllide a + reduced 2[4Fe-4S]-[ferredoxin] + 2 ATP + 2 H2O. The protein operates within porphyrin-containing compound metabolism; chlorophyll biosynthesis (light-independent). Its function is as follows. Component of the dark-operative protochlorophyllide reductase (DPOR) that uses Mg-ATP and reduced ferredoxin to reduce ring D of protochlorophyllide (Pchlide) to form chlorophyllide a (Chlide). This reaction is light-independent. The NB-protein (ChlN-ChlB) is the catalytic component of the complex. The chain is Light-independent protochlorophyllide reductase subunit N from Chlorella vulgaris (Green alga).